Here is a 245-residue protein sequence, read N- to C-terminus: Carboxy-S-adenosyl-L-methionine synthase (245 aa).

S-adenosyl-L-methionine is bound by residues Tyr42, 67 to 69, 92 to 93, 120 to 121, Asn135, and Arg202; these read GCS, DN, and DI.

This sequence belongs to the class I-like SAM-binding methyltransferase superfamily. Cx-SAM synthase family. Homodimer.

The catalysed reaction is prephenate + S-adenosyl-L-methionine = carboxy-S-adenosyl-L-methionine + 3-phenylpyruvate + H2O. Catalyzes the conversion of S-adenosyl-L-methionine (SAM) to carboxy-S-adenosyl-L-methionine (Cx-SAM). This is Carboxy-S-adenosyl-L-methionine synthase from Vibrio vulnificus (strain YJ016).